Reading from the N-terminus, the 196-residue chain is Probable malonic semialdehyde reductase RutE (196 aa).

Belongs to the nitroreductase family. HadB/RutE subfamily. It depends on FMN as a cofactor.

The catalysed reaction is 3-hydroxypropanoate + NADP(+) = 3-oxopropanoate + NADPH + H(+). May reduce toxic product malonic semialdehyde to 3-hydroxypropionic acid, which is excreted. In Shigella sonnei (strain Ss046), this protein is Probable malonic semialdehyde reductase RutE.